Here is a 419-residue protein sequence, read N- to C-terminus: Acyl-coenzyme A thioesterase 6 (419 aa).

Residues serine 232, aspartate 324, and histidine 358 each act as charge relay system in the active site. Positions serine 417–leucine 419 match the Peroxisome targeting signal motif.

This sequence belongs to the C/M/P thioester hydrolase family. As to expression, highly expressed in white adipose tissue. Detected at lower levels in kidney, liver, brown adipose tissue and brain.

It is found in the peroxisome. It catalyses the reaction pristanoyl-CoA + H2O = 2,6,10,14-tetramethylpentadecanoate + CoA + H(+). The catalysed reaction is phytanoyl-CoA + H2O = 3,7,11,15-tetramethylhexadecanoate + CoA + H(+). The protein operates within lipid metabolism; fatty acid metabolism. Catalyzes the hydrolysis of acyl-CoAs into free fatty acids and coenzyme A (CoASH), regulating their respective intracellular levels. Catalyzes the hydrolysis of phytanoyl-CoA and pristanoyl-CoA, two methyl-branched fatty acids derived from phytol, that enter the body via the diet. This is Acyl-coenzyme A thioesterase 6 from Mus musculus (Mouse).